An 86-amino-acid chain; its full sequence is Large ribosomal subunit protein bL27 (86 aa).

The tract at residues 1–24 is disordered; the sequence is MAHKKAGGSTRNGRDSESKRLGVK.

The protein belongs to the bacterial ribosomal protein bL27 family.

The sequence is that of Large ribosomal subunit protein bL27 from Alcanivorax borkumensis (strain ATCC 700651 / DSM 11573 / NCIMB 13689 / SK2).